Here is a 570-residue protein sequence, read N- to C-terminus: Mitoguardin 1 (570 aa).

A helical membrane pass occupies residues 34-54; that stretch reads GLKKIIAVAAISGVSLIFLAC.

The protein belongs to the mitoguardin family. In terms of assembly, homodimer and heterodimer; forms heterodimers with miga2.

The protein resides in the mitochondrion outer membrane. Functionally, regulator of mitochondrial fusion: acts by forming homo- and heterodimers at the mitochondrial outer membrane and facilitating the formation of pld6/MitoPLD dimers. May act by regulating phospholipid metabolism via pld6/MitoPLD. This chain is Mitoguardin 1, found in Xenopus laevis (African clawed frog).